Here is a 177-residue protein sequence, read N- to C-terminus: ATP synthase subunit delta (177 aa).

The protein belongs to the ATPase delta chain family. In terms of assembly, F-type ATPases have 2 components, F(1) - the catalytic core - and F(0) - the membrane proton channel. F(1) has five subunits: alpha(3), beta(3), gamma(1), delta(1), epsilon(1). F(0) has three main subunits: a(1), b(2) and c(10-14). The alpha and beta chains form an alternating ring which encloses part of the gamma chain. F(1) is attached to F(0) by a central stalk formed by the gamma and epsilon chains, while a peripheral stalk is formed by the delta and b chains.

Its subcellular location is the cell inner membrane. In terms of biological role, f(1)F(0) ATP synthase produces ATP from ADP in the presence of a proton or sodium gradient. F-type ATPases consist of two structural domains, F(1) containing the extramembraneous catalytic core and F(0) containing the membrane proton channel, linked together by a central stalk and a peripheral stalk. During catalysis, ATP synthesis in the catalytic domain of F(1) is coupled via a rotary mechanism of the central stalk subunits to proton translocation. Functionally, this protein is part of the stalk that links CF(0) to CF(1). It either transmits conformational changes from CF(0) to CF(1) or is implicated in proton conduction. This is ATP synthase subunit delta from Photorhabdus laumondii subsp. laumondii (strain DSM 15139 / CIP 105565 / TT01) (Photorhabdus luminescens subsp. laumondii).